Consider the following 596-residue polypeptide: Pentatricopeptide repeat-containing protein At1g80270, mitochondrial (596 aa).

Residues 1–69 (MFALSKVLRR…RALSSSAGTK (69 aa)) constitute a mitochondrion transit peptide. A disordered region spans residues 62-119 (LSSSAGTKSDQEEDDLEDGFSELEGSKSGQGSTSSDEDEGKLSADEEEEEELDLIETD). 2 stretches are compositionally biased toward acidic residues: residues 72–82 (QEEDDLEDGFS) and 96–117 (SDED…DLIE). PPR repeat units lie at residues 228–262 (GEVL…GFPL), 263–296 (SGFT…NIKP), 297–331 (SLLT…GVEL), 332–366 (DFQT…SLEA), 367–397 (NRRA…CESK), 399–433 (YFEE…DRRA), 434–468 (SSST…GCRI), 469–503 (EATT…SHTK), and 505–539 (MMNS…GYTS).

This sequence belongs to the PPR family. P subfamily.

Its subcellular location is the mitochondrion. In Arabidopsis thaliana (Mouse-ear cress), this protein is Pentatricopeptide repeat-containing protein At1g80270, mitochondrial.